We begin with the raw amino-acid sequence, 361 residues long: MLYWLTQLLQGQYHAFRVFQYLTFRSILASLTALIVGLLCGPLMIRWLRGLQIGQMVRSDGPQTHLSKAGTPTMGGVLILLAITVSCLLWCDLRQTSLWLVLLVTLANGLVGWVDDYRKLVLKNSKGLPGRWKYFWQSVIALVAVSYLYWNASLPVHTQLTVPFFKTVTWDLGVFFPVLAYFVIVGSSNAVNLTDGLDGLAIMPIVMVAGALGVFAYASSNAVYSNYLGIPYVPNTGELTIFCSSIVGAGLGFLWYNSYPAQVFMGDVGSLALGAALGIVAVVVRQELVLLIMGGLFVIETLSVILQVGYFKYSGGKRLFRMAPLHHHFELKGWSEPKVIVRFWIITVVFVLCGLATLKLR.

Transmembrane regions (helical) follow at residues 27–47, 70–90, 97–117, 134–154, 167–187, 199–219, 236–256, 263–283, 288–308, and 338–358; these read ILAS…MIRW, GTPT…CLLW, SLWL…VDDY, YFWQ…NASL, TVTW…IVGS, GLAI…AYAS, TGEL…FLWY, VFMG…VAVV, LVLL…ILQV, and KVIV…LATL.

The protein belongs to the glycosyltransferase 4 family. MraY subfamily. Requires Mg(2+) as cofactor.

It localises to the cell inner membrane. The catalysed reaction is UDP-N-acetyl-alpha-D-muramoyl-L-alanyl-gamma-D-glutamyl-meso-2,6-diaminopimeloyl-D-alanyl-D-alanine + di-trans,octa-cis-undecaprenyl phosphate = di-trans,octa-cis-undecaprenyl diphospho-N-acetyl-alpha-D-muramoyl-L-alanyl-D-glutamyl-meso-2,6-diaminopimeloyl-D-alanyl-D-alanine + UMP. The protein operates within cell wall biogenesis; peptidoglycan biosynthesis. In terms of biological role, catalyzes the initial step of the lipid cycle reactions in the biosynthesis of the cell wall peptidoglycan: transfers peptidoglycan precursor phospho-MurNAc-pentapeptide from UDP-MurNAc-pentapeptide onto the lipid carrier undecaprenyl phosphate, yielding undecaprenyl-pyrophosphoryl-MurNAc-pentapeptide, known as lipid I. This chain is Phospho-N-acetylmuramoyl-pentapeptide-transferase, found in Legionella pneumophila subsp. pneumophila (strain Philadelphia 1 / ATCC 33152 / DSM 7513).